We begin with the raw amino-acid sequence, 198 residues long: 7-methyl-GTP pyrophosphatase (198 aa).

Asp-75 functions as the Proton acceptor in the catalytic mechanism.

This sequence belongs to the Maf family. YceF subfamily. Requires a divalent metal cation as cofactor.

Its subcellular location is the cytoplasm. The catalysed reaction is N(7)-methyl-GTP + H2O = N(7)-methyl-GMP + diphosphate + H(+). In terms of biological role, nucleoside triphosphate pyrophosphatase that hydrolyzes 7-methyl-GTP (m(7)GTP). May have a dual role in cell division arrest and in preventing the incorporation of modified nucleotides into cellular nucleic acids. This Nitrosospira multiformis (strain ATCC 25196 / NCIMB 11849 / C 71) protein is 7-methyl-GTP pyrophosphatase.